The sequence spans 253 residues: 3-deoxy-manno-octulosonate cytidylyltransferase (253 aa).

It belongs to the KdsB family.

Its subcellular location is the cytoplasm. It catalyses the reaction 3-deoxy-alpha-D-manno-oct-2-ulosonate + CTP = CMP-3-deoxy-beta-D-manno-octulosonate + diphosphate. It participates in nucleotide-sugar biosynthesis; CMP-3-deoxy-D-manno-octulosonate biosynthesis; CMP-3-deoxy-D-manno-octulosonate from 3-deoxy-D-manno-octulosonate and CTP: step 1/1. It functions in the pathway bacterial outer membrane biogenesis; lipopolysaccharide biosynthesis. Activates KDO (a required 8-carbon sugar) for incorporation into bacterial lipopolysaccharide in Gram-negative bacteria. The protein is 3-deoxy-manno-octulosonate cytidylyltransferase of Neisseria meningitidis serogroup C (strain 053442).